Reading from the N-terminus, the 395-residue chain is MANFVTDSRNGLTISCAPQDQSHLHPTIRALVMEGDSVIFRGLPHPDIHREAPPAGLRLKDCLVYDSYEGALVNVFWHGGQWWFCTNKKLSIDRASWSASPGSFKRAFVNCLRKMWRDDRSWADLFDRSYMPSFCDANLDKDLGYVFMVFDPEERIVCSDTEQRLRLLATFDRCTNSHSYECSLTLTCGTEVEVPRPICLKNEREFLLHLRSQDPCRVAGVVLIDALDIHYKILPSEYTKVLDARGEQPRLLNRMFQLMEMGPEGEAHIEVLCRYFSDARVAMERAWDVRERIVQCYLDLTEPDSEPQVWMTRRLMEIVRGCRPGTERTMIDEFLRTMTTGQRKAFYKKHACLAGGDNAWISSDAPIKQAKTVQDLVEFPDDNCQDMDELFVVRA.

The protein belongs to the IIV-6 393L family.

This chain is Immediate-early protein ICP-46 (ICR489), found in Dryophytes versicolor (chameleon treefrog).